A 490-amino-acid polypeptide reads, in one-letter code: Keratin, type II cytoskeletal 8 (490 aa).

The segment covering 1–27 (MSIRVTQKSYKMSTSGPRAFSSRSFTS) has biased composition (polar residues). The disordered stretch occupies residues 1–48 (MSIRVTQKSYKMSTSGPRAFSSRSFTSGPGARISSSSFSRVGSSSSSF). Residues 1–96 (MSIRVTQKSY…DPNIQAVRTQ (96 aa)) are head. Phosphoserine; by PKC/PRKCE is present on Ser9. Lys11 participates in a covalent cross-link: Glycyl lysine isopeptide (Lys-Gly) (interchain with G-Cter in SUMO2). Phosphoserine occurs at positions 13, 15, 21, and 22. Arg23 carries the post-translational modification Omega-N-methylarginine. At Ser24 the chain carries Phosphoserine; by PKC/PRKCE. Thr26 is subject to Phosphothreonine. Ser27 carries the post-translational modification Phosphoserine. Arg32 carries the post-translational modification Omega-N-methylarginine. Phosphoserine is present on residues Ser34, Ser37, and Ser39. Over residues 34-48 (SSSSFSRVGSSSSSF) the composition is skewed to low complexity. Arg40 carries the omega-N-methylarginine modification. Residues Ser43, Ser44, and Ser47 each carry the phosphoserine modification. Position 49 is an asymmetric dimethylarginine; alternate (Arg49). Residue Arg49 is modified to Omega-N-methylarginine; alternate. Ser51 bears the Phosphoserine mark. Ser80 bears the Phosphoserine; by MAPK mark. Positions 97-132 (EKEQIKSLNNKFASFIDKVRFLEQQNKMLETKWSLL) are coil 1A. The region spanning 97–408 (EKEQIKSLNN…KLLEGEESRL (312 aa)) is the IF rod domain. At Lys107 the chain carries N6-malonyllysine. Glycyl lysine isopeptide (Lys-Gly) (interchain with G-Cter in SUMO2) cross-links involve residues Lys128 and Lys136. Residues 133–149 (QQQKTSRSNMDNMFESY) form a linker 1 region. The tract at residues 150-241 (INNLRRQLEA…QIHEEEIREL (92 aa)) is coil 1B. Lys203 participates in a covalent cross-link: Glycyl lysine isopeptide (Lys-Gly) (interchain with G-Cter in SUMO1); alternate. Residue Lys203 forms a Glycyl lysine isopeptide (Lys-Gly) (interchain with G-Cter in SUMO2); alternate linkage. N6-acetyllysine is present on Lys213. A linker 12 region spans residues 242–265 (QSQISDTSVVLSMDNSRSLDMDGI). Phosphoserine is present on residues Ser259 and Ser280. The interval 266-403 (IAEVRAQYED…ITTYRKLLEG (138 aa)) is coil 2. A necessary for interaction with PNN region spans residues 267–387 (AEVRAQYEDI…REYQELMNVK (121 aa)). Lys291 participates in a covalent cross-link: Glycyl lysine isopeptide (Lys-Gly) (interchain with G-Cter in SUMO2). Lys301 participates in a covalent cross-link: Glycyl lysine isopeptide (Lys-Gly) (interchain with G-Cter in SUMO2); alternate. Lys301 carries the post-translational modification N6-acetyllysine; alternate. Lys310 participates in a covalent cross-link: Glycyl lysine isopeptide (Lys-Gly) (interchain with G-Cter in SUMO2). Residue Lys331 forms a Glycyl lysine isopeptide (Lys-Gly) (interchain with G-Cter in SUMO2); alternate linkage. Position 331 is an N6-acetyllysine; alternate (Lys331). A Phosphoserine modification is found at Ser336. Residue Lys399 forms a Glycyl lysine isopeptide (Lys-Gly) (interchain with G-Cter in SUMO2) linkage. Residues 404-490 (EESRLESGMQ…VSESSDVVSK (87 aa)) form a tail region. Phosphoserine occurs at positions 406, 410, 416, 423, 430, 432, and 438. Lys479 is covalently cross-linked (Glycyl lysine isopeptide (Lys-Gly) (interchain with G-Cter in SUMO1); alternate). Residue Lys479 forms a Glycyl lysine isopeptide (Lys-Gly) (interchain with G-Cter in SUMO2); alternate linkage. Phosphoserine occurs at positions 482, 484, 485, and 489.

This sequence belongs to the intermediate filament family. As to quaternary structure, heterotetramer of two type I and two type II keratins. Forms a heterodimer with KRT18. Associates with KRT20. Interacts with PLEC isoform 1C, when in a heterodimer with KRT18. Interacts with PNN. When associated with KRT19, interacts with DMD. Interacts with TCHP. Interacts with APEX1. Interacts with GPER1. Interacts with EPPK1. Interacts with PKP1 and PKP2. Phosphorylation on serine residues is enhanced during EGF stimulation and mitosis. Ser-80 phosphorylation plays an important role in keratin filament reorganization. In terms of processing, O-glycosylated. O-GlcNAcylation at multiple sites increases solubility, and decreases stability by inducing proteasomal degradation. Post-translationally, O-glycosylated (O-GlcNAcylated), in a cell cycle-dependent manner. As to expression, expressed in abundance in the epithelia of colon, bladder, ileum, and stomach, with lower expression observed in earskin (at protein level). Also expressed in pancreas, liver, dudenum and jejunum.

It is found in the cytoplasm. Its subcellular location is the nucleus. The protein resides in the nucleoplasm. It localises to the nucleus matrix. Its function is as follows. Together with KRT19, helps to link the contractile apparatus to dystrophin at the costameres of striated muscle. This Mus musculus (Mouse) protein is Keratin, type II cytoskeletal 8 (Krt8).